A 200-amino-acid polypeptide reads, in one-letter code: SKP1-like protein 19 (200 aa).

A compositionally biased stretch (basic and acidic residues) spans 67-92 (DDVVETHESSTKGDKTVEEAKKKPDD). The segment at 67-109 (DDVVETHESSTKGDKTVEEAKKKPDDVAVPESTEGDDEAEDKK) is disordered. The interaction with the F-box domain of F-box proteins stretch occupies residues 132–190 (ILAANYLNVQGLFDLCSKTIADYIKDMTPEEVRELFNIENDFTPEEEEAIRNENAWTFE).

The protein belongs to the SKP1 family. Part of a SCF (SKP1-cullin-F-box) protein ligase complex. Interacts with CPR1/CPR30. Expressed in leaves and flowers.

It is found in the nucleus. It participates in protein modification; protein ubiquitination. In terms of biological role, involved in ubiquitination and subsequent proteasomal degradation of target proteins. Together with CUL1, RBX1 and a F-box protein, it forms a SCF E3 ubiquitin ligase complex. The functional specificity of this complex depends on the type of F-box protein. In the SCF complex, it serves as an adapter that links the F-box protein to CUL1. The chain is SKP1-like protein 19 (ASK19) from Arabidopsis thaliana (Mouse-ear cress).